Here is a 526-residue protein sequence, read N- to C-terminus: MASKIASLFSPSETASKDQHENVAEDLELGTASSQSDGIHETNSEYDEKKREESPEVIDISNLISSDHPAHPQNWHWAKRWSIVFMFCLMQIYVIWTSNGFGSIEYSVMAQFNVSAQVATLCLSMNILGSGLGPMFLGPLSDIGGRKPVYFCSIFVYTVFNISCALPRNIVQMIISHFIIGVAGSTALTNVAGGIPDLFPEDTAGVPMSLFVWACAGGAIGAPMATGVDINAKYGWRWLYYINIIVGGFFLIVILIIPETLPIKVITRYENAKGRIVEGIPKNNLKEVLKKCKFVTTMGFRMMLTEPIILSMGLYNFYAYGISYFFLTAIWPVFYDTYKMSEMGASCTYLSGFVASTLLFLYQPIQDWIFRRDKAKNNGVARPEARFTSALFITLLFPAGMFLFAFTCHPPFPWMSPIVGNSMVTVANGHNWMCILNYLTDSYPLLSGSAVAAFTLPSFIGATVFAHVSQIMFNNMSVKWAVATMAFISISIPFIIYTFYFFGQRIRALSSLTGNKALKYLPLENN.

The interval 1 to 53 is disordered; the sequence is MASKIASLFSPSETASKDQHENVAEDLELGTASSQSDGIHETNSEYDEKKREE. The span at 38 to 53 shows a compositional bias: basic and acidic residues; that stretch reads GIHETNSEYDEKKREE. 12 helical membrane-spanning segments follow: residues 81-101, 118-138, 147-167, 173-192, 204-224, 238-257, 314-330, 349-366, 387-407, 413-432, 444-461, and 480-501; these read WSIVFMFCLMQIYVIWTSNGF, VATLCLSMNILGSGLGPMFLG, KPVYFCSIFVYTVFNISCALP, MIISHFIIGVAGSTALTNVA, AGVPMSLFVWACAGGAIGAPM, WLYYINIIVGGFFLIVILII, LYNFYAYGISYFFLTAI, YLSGFVASTLLFLYQPIQ, FTSALFITLLFPAGMFLFAFT, PWMSPIVGNSMVTVANGHNW, PLLSGSAVAAFTLPSFIG, and WAVATMAFISISIPFIIYTFYF.

Belongs to the major facilitator superfamily. CAR1 family.

Its subcellular location is the membrane. Thiamine-regulated, high affinity import carrier of pyridoxine, pyridoxal and pyridoxamine. Also imports, but does not export, amiloride and so confers sensitivity. This chain is Vitamin B6 transporter bsu1 (bsu1), found in Schizosaccharomyces pombe (strain 972 / ATCC 24843) (Fission yeast).